The chain runs to 237 residues: Phosphoribosylaminoimidazole-succinocarboxamide synthase (237 aa).

It belongs to the SAICAR synthetase family.

It carries out the reaction 5-amino-1-(5-phospho-D-ribosyl)imidazole-4-carboxylate + L-aspartate + ATP = (2S)-2-[5-amino-1-(5-phospho-beta-D-ribosyl)imidazole-4-carboxamido]succinate + ADP + phosphate + 2 H(+). It functions in the pathway purine metabolism; IMP biosynthesis via de novo pathway; 5-amino-1-(5-phospho-D-ribosyl)imidazole-4-carboxamide from 5-amino-1-(5-phospho-D-ribosyl)imidazole-4-carboxylate: step 1/2. This Psychrobacter cryohalolentis (strain ATCC BAA-1226 / DSM 17306 / VKM B-2378 / K5) protein is Phosphoribosylaminoimidazole-succinocarboxamide synthase.